The primary structure comprises 115 residues: NADH-ubiquinone oxidoreductase chain 3 (115 aa).

3 helical membrane passes run 3–23 (LMIT…IAFW), 55–75 (FFLV…LLPL), and 86–106 (LTLL…AYEW).

The protein belongs to the complex I subunit 3 family. In terms of assembly, core subunit of respiratory chain NADH dehydrogenase (Complex I) which is composed of 45 different subunits. Interacts with TMEM186. Interacts with TMEM242.

It is found in the mitochondrion inner membrane. It catalyses the reaction a ubiquinone + NADH + 5 H(+)(in) = a ubiquinol + NAD(+) + 4 H(+)(out). Its function is as follows. Core subunit of the mitochondrial membrane respiratory chain NADH dehydrogenase (Complex I) which catalyzes electron transfer from NADH through the respiratory chain, using ubiquinone as an electron acceptor. Essential for the catalytic activity of complex I. The protein is NADH-ubiquinone oxidoreductase chain 3 of Loxodonta africana (African elephant).